Consider the following 371-residue polypeptide: 4-hydroxy-3-methylbut-2-en-1-yl diphosphate synthase (flavodoxin) (371 aa).

[4Fe-4S] cluster is bound by residues C270, C273, C305, and E312.

It belongs to the IspG family. The cofactor is [4Fe-4S] cluster.

The enzyme catalyses (2E)-4-hydroxy-3-methylbut-2-enyl diphosphate + oxidized [flavodoxin] + H2O + 2 H(+) = 2-C-methyl-D-erythritol 2,4-cyclic diphosphate + reduced [flavodoxin]. It functions in the pathway isoprenoid biosynthesis; isopentenyl diphosphate biosynthesis via DXP pathway; isopentenyl diphosphate from 1-deoxy-D-xylulose 5-phosphate: step 5/6. Converts 2C-methyl-D-erythritol 2,4-cyclodiphosphate (ME-2,4cPP) into 1-hydroxy-2-methyl-2-(E)-butenyl 4-diphosphate. The sequence is that of 4-hydroxy-3-methylbut-2-en-1-yl diphosphate synthase (flavodoxin) from Shewanella piezotolerans (strain WP3 / JCM 13877).